The chain runs to 72 residues: Translation initiation factor IF-1 2 (72 aa).

The S1-like domain maps to 1-72 (MAKEELIEFE…TKGRINYRHK (72 aa)).

It belongs to the IF-1 family. In terms of assembly, component of the 30S ribosomal translation pre-initiation complex which assembles on the 30S ribosome in the order IF-2 and IF-3, IF-1 and N-formylmethionyl-tRNA(fMet); mRNA recruitment can occur at any time during PIC assembly.

The protein localises to the cytoplasm. One of the essential components for the initiation of protein synthesis. Stabilizes the binding of IF-2 and IF-3 on the 30S subunit to which N-formylmethionyl-tRNA(fMet) subsequently binds. Helps modulate mRNA selection, yielding the 30S pre-initiation complex (PIC). Upon addition of the 50S ribosomal subunit IF-1, IF-2 and IF-3 are released leaving the mature 70S translation initiation complex. This Ralstonia nicotianae (strain ATCC BAA-1114 / GMI1000) (Ralstonia solanacearum) protein is Translation initiation factor IF-1 2.